The primary structure comprises 399 residues: Maltose excess protein 1-like, chloroplastic (399 aa).

A chloroplast-targeting transit peptide spans 1-67 (MSSSVSSVRL…RRRRYALPPV (67 aa)). 9 helical membrane-spanning segments follow: residues 93 to 113 (FAGA…ILNA), 123 to 143 (ALFA…LSLL), 154 to 174 (AVIV…QLAM), 180 to 202 (LPQF…LNYF), 217 to 237 (ITIG…VPFI), 238 to 258 (PNSL…VVMA), 268 to 288 (INFV…WMPV), 306 to 326 (AFTM…AVFI), and 361 to 381 (FLAT…RDTI).

The protein localises to the plastid. It localises to the chloroplast inner membrane. Its function is as follows. Probable maltose transporter. Essential for the conversion of starch to sucrose in leaves at night, probably via the export of maltose from the chloroplast. The polypeptide is Maltose excess protein 1-like, chloroplastic (Oryza sativa subsp. japonica (Rice)).